Reading from the N-terminus, the 266-residue chain is Phosphate import ATP-binding protein PstB 1 (266 aa).

In terms of domain architecture, ABC transporter spans 18–261 (AQTSNLSFYY…PTNQLTEQYV (244 aa)). Position 50–57 (50–57 (GPSGCGKT)) interacts with ATP.

This sequence belongs to the ABC transporter superfamily. Phosphate importer (TC 3.A.1.7) family. The complex is composed of two ATP-binding proteins (PstB), two transmembrane proteins (PstC and PstA) and a solute-binding protein (PstS).

Its subcellular location is the cell inner membrane. It catalyses the reaction phosphate(out) + ATP + H2O = ADP + 2 phosphate(in) + H(+). Functionally, part of the ABC transporter complex PstSACB involved in phosphate import. Responsible for energy coupling to the transport system. The chain is Phosphate import ATP-binding protein PstB 1 from Gloeobacter violaceus (strain ATCC 29082 / PCC 7421).